A 55-amino-acid polypeptide reads, in one-letter code: MAKGVREKIKLVSSAGTGHFYTTTKNKRTKPEKLELKKFDPVVRQHVLYKEAKIK.

It belongs to the bacterial ribosomal protein bL33 family.

This Yersinia pestis (strain Pestoides F) protein is Large ribosomal subunit protein bL33.